Reading from the N-terminus, the 437-residue chain is Kynureninase (437 aa).

Residues L99, T100, 127–130, S183, D212, H215, and Y237 contribute to the pyridoxal 5'-phosphate site; that span reads FPSD. K238 bears the N6-(pyridoxal phosphate)lysine mark. W267 and N295 together coordinate pyridoxal 5'-phosphate.

The protein belongs to the kynureninase family. Homodimer. Pyridoxal 5'-phosphate is required as a cofactor.

It is found in the cytoplasm. The catalysed reaction is L-kynurenine + H2O = anthranilate + L-alanine + H(+). The enzyme catalyses 3-hydroxy-L-kynurenine + H2O = 3-hydroxyanthranilate + L-alanine + H(+). It functions in the pathway amino-acid degradation; L-kynurenine degradation; L-alanine and anthranilate from L-kynurenine: step 1/1. Its pathway is cofactor biosynthesis; NAD(+) biosynthesis; quinolinate from L-kynurenine: step 2/3. Its function is as follows. Catalyzes the cleavage of L-kynurenine (L-Kyn) and L-3-hydroxykynurenine (L-3OHKyn) into anthranilic acid (AA) and 3-hydroxyanthranilic acid (3-OHAA), respectively. This is Kynureninase from Yarrowia lipolytica (strain CLIB 122 / E 150) (Yeast).